The primary structure comprises 73 residues: Salivary thrombin inhibitor XC-42 (73 aa).

A signal peptide spans 1–23 (MKLQFLFIFIAFCVMLFAQIATA).

In terms of assembly, interacts with human F2 (thrombin). Salivary gland (at protein level).

Its subcellular location is the secreted. Acts as a competitive inhibitor of host thrombin. This chain is Salivary thrombin inhibitor XC-42, found in Xenopsylla cheopis (Oriental rat flea).